The sequence spans 489 residues: Alpha-amylase (489 aa).

The N-terminal stretch at 1 to 16 is a signal peptide; the sequence is HFKPILVLCLATLALG. C44 and C102 are joined by a disulfide. N116, R164, and D173 together coordinate Ca(2+). C152 and C166 are joined by a disulfide. Position 201 (R201) interacts with chloride. The Nucleophile role is filled by D203. H207 provides a ligand contact to Ca(2+). Catalysis depends on E240, which acts as the Proton donor. Positions 303 and 339 each coordinate chloride. 2 cysteine pairs are disulfide-bonded: C372-C378 and C443-C455.

Belongs to the glycosyl hydrolase 13 family. As to quaternary structure, monomer. The cofactor is Ca(2+). It depends on chloride as a cofactor.

It carries out the reaction Endohydrolysis of (1-&gt;4)-alpha-D-glucosidic linkages in polysaccharides containing three or more (1-&gt;4)-alpha-linked D-glucose units.. The polypeptide is Alpha-amylase (Tribolium castaneum (Red flour beetle)).